Here is a 581-residue protein sequence, read N- to C-terminus: Chaperonin GroEL 1 (581 aa).

Residues 29-32 (TIGP), 86-90 (DGTTT), Gly413, and Asp492 contribute to the ATP site. Residues 522 to 541 (PEPEAAGPGGPGADPMGGMG) form a disordered region. Over residues 528–541 (GPGGPGADPMGGMG) the composition is skewed to gly residues.

This sequence belongs to the chaperonin (HSP60) family. In terms of assembly, forms a cylinder of 14 subunits composed of two heptameric rings stacked back-to-back. Interacts with the co-chaperonin GroES.

The protein resides in the cytoplasm. It carries out the reaction ATP + H2O + a folded polypeptide = ADP + phosphate + an unfolded polypeptide.. Together with its co-chaperonin GroES, plays an essential role in assisting protein folding. The GroEL-GroES system forms a nano-cage that allows encapsulation of the non-native substrate proteins and provides a physical environment optimized to promote and accelerate protein folding. This chain is Chaperonin GroEL 1, found in Prochlorococcus marinus (strain MIT 9301).